The sequence spans 101 residues: NADH-quinone oxidoreductase subunit K (101 aa).

3 consecutive transmembrane segments (helical) span residues 5 to 25 (LTHY…GIIL), 30 to 50 (IVIL…LVAF), and 61 to 81 (VLVF…LALI).

Belongs to the complex I subunit 4L family. As to quaternary structure, NDH-1 is composed of 14 different subunits. Subunits NuoA, H, J, K, L, M, N constitute the membrane sector of the complex.

It is found in the cell inner membrane. The enzyme catalyses a quinone + NADH + 5 H(+)(in) = a quinol + NAD(+) + 4 H(+)(out). NDH-1 shuttles electrons from NADH, via FMN and iron-sulfur (Fe-S) centers, to quinones in the respiratory chain. The immediate electron acceptor for the enzyme in this species is believed to be ubiquinone. Couples the redox reaction to proton translocation (for every two electrons transferred, four hydrogen ions are translocated across the cytoplasmic membrane), and thus conserves the redox energy in a proton gradient. The polypeptide is NADH-quinone oxidoreductase subunit K (Methylacidiphilum infernorum (isolate V4) (Methylokorus infernorum (strain V4))).